Reading from the N-terminus, the 415-residue chain is Mitogen-activated protein kinase MPS1 (415 aa).

The Protein kinase domain occupies 23 to 314 (YTVTKELGQG…VEQALEHPYL (292 aa)). Residues 29–37 (LGQGAYGIV) and K52 each bind ATP. Positions 363–394 (GAGGHGAPHAPQVPIPAGAGQGQWKAEDPRPQ) are disordered.

This sequence belongs to the protein kinase superfamily. Ser/Thr protein kinase family. MAP kinase subfamily. In terms of assembly, interacts with transcription factor MIG1. Interacts with transcription factor SWI6. The cofactor is Mg(2+).

The catalysed reaction is L-seryl-[protein] + ATP = O-phospho-L-seryl-[protein] + ADP + H(+). It catalyses the reaction L-threonyl-[protein] + ATP = O-phospho-L-threonyl-[protein] + ADP + H(+). Functionally, mitogen-activated protein kinase; part of the MCK1-MKK2-MPS1 MAP kinase (MAPK) signal transduction cascade that is essential for cell wall integrity and plant infection, but not for plant defense responses. Beside its role in pathogenesis, the MPS1 cascade is active in conidiation and cellular stress responses. Targets downstream of the MPS1-MAPK pathway include transcription factors MIG1 and SWI6, as well as GSK1 and MPG1. This chain is Mitogen-activated protein kinase MPS1, found in Pyricularia oryzae (strain 70-15 / ATCC MYA-4617 / FGSC 8958) (Rice blast fungus).